The primary structure comprises 322 residues: GTP 3',8-cyclase (322 aa).

Residues 5-233 enclose the Radical SAM core domain; sequence KYGRVVDYLR…NAPASIYRLD (229 aa). GTP is bound at residue Arg14. [4Fe-4S] cluster is bound by residues Cys21 and Cys25. Position 27 (Tyr27) interacts with S-adenosyl-L-methionine. Residue Cys28 participates in [4Fe-4S] cluster binding. A GTP-binding site is contributed by Arg64. Gly68 is a binding site for S-adenosyl-L-methionine. Residue Thr95 coordinates GTP. Ser119 serves as a coordination point for S-adenosyl-L-methionine. Lys155 serves as a coordination point for GTP. Residue Met189 participates in S-adenosyl-L-methionine binding. The [4Fe-4S] cluster site is built by Cys249 and Cys252. 254–256 serves as a coordination point for GTP; that stretch reads RIR. Cys266 serves as a coordination point for [4Fe-4S] cluster.

Belongs to the radical SAM superfamily. MoaA family. As to quaternary structure, monomer and homodimer. Requires [4Fe-4S] cluster as cofactor.

It catalyses the reaction GTP + AH2 + S-adenosyl-L-methionine = (8S)-3',8-cyclo-7,8-dihydroguanosine 5'-triphosphate + 5'-deoxyadenosine + L-methionine + A + H(+). The protein operates within cofactor biosynthesis; molybdopterin biosynthesis. Functionally, catalyzes the cyclization of GTP to (8S)-3',8-cyclo-7,8-dihydroguanosine 5'-triphosphate. The polypeptide is GTP 3',8-cyclase (Campylobacter curvus (strain 525.92)).